Reading from the N-terminus, the 247-residue chain is Carboxy-S-adenosyl-L-methionine synthase (247 aa).

S-adenosyl-L-methionine contacts are provided by residues Y40, 65–67 (GAS), 90–91 (DN), 122–123 (DI), N137, and R204.

This sequence belongs to the class I-like SAM-binding methyltransferase superfamily. Cx-SAM synthase family. As to quaternary structure, homodimer.

It carries out the reaction prephenate + S-adenosyl-L-methionine = carboxy-S-adenosyl-L-methionine + 3-phenylpyruvate + H2O. Catalyzes the conversion of S-adenosyl-L-methionine (SAM) to carboxy-S-adenosyl-L-methionine (Cx-SAM). This Pseudomonas putida (strain ATCC 700007 / DSM 6899 / JCM 31910 / BCRC 17059 / LMG 24140 / F1) protein is Carboxy-S-adenosyl-L-methionine synthase.